Reading from the N-terminus, the 110-residue chain is Thiosulfate sulfurtransferase GlpE (110 aa).

Residues 17 to 105 (RENGAQVVDI…WRSVYPADTS (89 aa)) enclose the Rhodanese domain. The Cysteine persulfide intermediate role is filled by Cys-65.

It belongs to the GlpE family.

It localises to the cytoplasm. It carries out the reaction thiosulfate + hydrogen cyanide = thiocyanate + sulfite + 2 H(+). The catalysed reaction is thiosulfate + [thioredoxin]-dithiol = [thioredoxin]-disulfide + hydrogen sulfide + sulfite + 2 H(+). Transferase that catalyzes the transfer of sulfur from thiosulfate to thiophilic acceptors such as cyanide or dithiols. May function in a CysM-independent thiosulfate assimilation pathway by catalyzing the conversion of thiosulfate to sulfite, which can then be used for L-cysteine biosynthesis. The polypeptide is Thiosulfate sulfurtransferase GlpE (Pseudomonas aeruginosa (strain LESB58)).